A 667-amino-acid polypeptide reads, in one-letter code: Mediator of RNA polymerase II transcription subunit 17 (667 aa).

The stretch at lysine 172–leucine 197 forms a coiled coil.

It belongs to the Mediator complex subunit 17 family. Component of the Mediator complex.

It localises to the nucleus. Functionally, component of the Mediator complex, a coactivator involved in regulated gene transcription of nearly all RNA polymerase II-dependent genes. Mediator functions as a bridge to convey information from gene-specific regulatory proteins to the basal RNA polymerase II transcription machinery. Mediator is recruited to promoters by direct interactions with regulatory proteins and serves as a scaffold for the assembly of a functional preinitiation complex with RNA polymerase II and the general transcription factors. This is Mediator of RNA polymerase II transcription subunit 17 (mdt-17) from Caenorhabditis elegans.